Here is a 351-residue protein sequence, read N- to C-terminus: (S)-coclaurine N-methyltransferase (351 aa).

S-adenosyl-L-methionine is bound by residues 91–92, 126–134, 130–132, and 153–158; these read QS, VLDLGCGLG, GCG, and TSSVEQ. C326 is a catalytic residue.

The protein belongs to the CFA/CMAS family. Expressed in roots, stems, flower buds and at lower levels, in leaves. Restricted to sieve elements of the phloem adjacent or proximal to laticifers.

The protein resides in the cytoplasm. The catalysed reaction is (S)-coclaurine + S-adenosyl-L-methionine = (S)-N-methylcoclaurine + S-adenosyl-L-homocysteine + H(+). The protein operates within alkaloid biosynthesis; (S)-reticuline biosynthesis; (S)-reticuline from (S)-norcoclaurine: step 2/4. Its function is as follows. Involved in the biosynthesis of benzylisoquinoline alkaloids. N-methyltransferase methylating (S)-coclaurine. 4'-O-methylcoclaurine and norlaudanine can also be used as substrates. This Papaver somniferum (Opium poppy) protein is (S)-coclaurine N-methyltransferase.